Here is a 122-residue protein sequence, read N- to C-terminus: Large ribosomal subunit protein uL14 (122 aa).

Belongs to the universal ribosomal protein uL14 family. As to quaternary structure, part of the 50S ribosomal subunit. Forms a cluster with proteins L3 and L19. In the 70S ribosome, L14 and L19 interact and together make contacts with the 16S rRNA in bridges B5 and B8.

Binds to 23S rRNA. Forms part of two intersubunit bridges in the 70S ribosome. The sequence is that of Large ribosomal subunit protein uL14 from Parafrankia sp. (strain EAN1pec).